The primary structure comprises 122 residues: Large ribosomal subunit protein uL18 (122 aa).

Belongs to the universal ribosomal protein uL18 family. As to quaternary structure, part of the 50S ribosomal subunit; part of the 5S rRNA/L5/L18/L25 subcomplex. Contacts the 5S and 23S rRNAs.

In terms of biological role, this is one of the proteins that bind and probably mediate the attachment of the 5S RNA into the large ribosomal subunit, where it forms part of the central protuberance. In Hydrogenobaculum sp. (strain Y04AAS1), this protein is Large ribosomal subunit protein uL18.